The chain runs to 149 residues: Alpha-crystallin A chain (149 aa).

Positions 41 to 149 (LFRSVLESGI…DPSHSERPIP (109 aa)) constitute a sHSP domain. Residues His89, Glu91, His96, and His143 each contribute to the Zn(2+) site.

This sequence belongs to the small heat shock protein (HSP20) family. In terms of assembly, heteropolymer composed of three CRYAA and one CRYAB subunits. Inter-subunit bridging via zinc ions enhances stability, which is crucial as there is no protein turn over in the lens. Can also form homodimers and homotetramers (dimers of dimers) which serve as the building blocks of homooligomers. Within homooligomers, the zinc-binding motif is created from residues of 3 different molecules. His-89 and Glu-91 from one molecule are ligands of the zinc ion, and His-96 and His-143 residues from additional molecules complete the site with tetrahedral coordination geometry.

Its subcellular location is the cytoplasm. It localises to the nucleus. Functionally, contributes to the transparency and refractive index of the lens. May act as a chaperone, preventing aggregation of various proteins under a wide range of stress conditions. In Eudromia elegans (Elegant crested-tinamou), this protein is Alpha-crystallin A chain (CRYAA).